We begin with the raw amino-acid sequence, 278 residues long: MPFITVGQENSTSIDLYYEDHGAGQPVVLIHGFPLSGHSWERQSAALLDAGYRVITYDRRGFGQSSQPTTGYDYDTFAADLNTVLETLDLQDAVLVGFSMGTGEVARYVSSYGTARIAKVAFLASLEPFLLKTDDNPDGAAPKEFFDGIVAAVKADRYAFYTGFFNDFYNLDENLGTRISEEAVRNSWNTAASGGFFAAAAAPTTWYTDFRADIPRIDVPALILHGTGDRTLPIENTARVFHKALPSAEYVEVEGAPHGLLWTHAEEVNTALLAFLAK.

An AB hydrolase-1 domain is found at 26–264 (PVVLIHGFPL…GAPHGLLWTH (239 aa)). Active-site residues include S99, D229, and H258.

This sequence belongs to the AB hydrolase superfamily. Bacterial non-heme haloperoxidase / perhydrolase family. In terms of assembly, homodimer.

The sequence is that of Non-heme chloroperoxidase (cpo) from Kitasatospora aureofaciens (Streptomyces aureofaciens).